Here is a 394-residue protein sequence, read N- to C-terminus: Nicotinate phosphoribosyltransferase (394 aa).

H218 carries the phosphohistidine; by autocatalysis modification.

Belongs to the NAPRTase family. In terms of processing, transiently phosphorylated on a His residue during the reaction cycle. Phosphorylation strongly increases the affinity for substrates and increases the rate of nicotinate D-ribonucleotide production. Dephosphorylation regenerates the low-affinity form of the enzyme, leading to product release.

It carries out the reaction nicotinate + 5-phospho-alpha-D-ribose 1-diphosphate + ATP + H2O = nicotinate beta-D-ribonucleotide + ADP + phosphate + diphosphate. Its pathway is cofactor biosynthesis; NAD(+) biosynthesis; nicotinate D-ribonucleotide from nicotinate: step 1/1. In terms of biological role, catalyzes the synthesis of beta-nicotinate D-ribonucleotide from nicotinate and 5-phospho-D-ribose 1-phosphate at the expense of ATP. This chain is Nicotinate phosphoribosyltransferase, found in Xylella fastidiosa (strain Temecula1 / ATCC 700964).